We begin with the raw amino-acid sequence, 72 residues long: ATP synthase subunit c (72 aa).

The next 2 helical transmembrane spans lie at 5–25 and 52–72; these read LLAAGIAVLAGIGAGIGIGIA and GLSEATAIYGLVISIILLFVV.

It belongs to the ATPase C chain family. In terms of assembly, F-type ATPases have 2 components, F(1) - the catalytic core - and F(0) - the membrane proton channel. F(1) has five subunits: alpha(3), beta(3), gamma(1), delta(1), epsilon(1). F(0) has three main subunits: a(1), b(2) and c(10-14). The alpha and beta chains form an alternating ring which encloses part of the gamma chain. F(1) is attached to F(0) by a central stalk formed by the gamma and epsilon chains, while a peripheral stalk is formed by the delta and b chains.

The protein localises to the cell membrane. In terms of biological role, f(1)F(0) ATP synthase produces ATP from ADP in the presence of a proton or sodium gradient. F-type ATPases consist of two structural domains, F(1) containing the extramembraneous catalytic core and F(0) containing the membrane proton channel, linked together by a central stalk and a peripheral stalk. During catalysis, ATP synthesis in the catalytic domain of F(1) is coupled via a rotary mechanism of the central stalk subunits to proton translocation. Its function is as follows. Key component of the F(0) channel; it plays a direct role in translocation across the membrane. A homomeric c-ring of between 10-14 subunits forms the central stalk rotor element with the F(1) delta and epsilon subunits. The sequence is that of ATP synthase subunit c from Clostridium perfringens (strain SM101 / Type A).